Consider the following 172-residue polypeptide: RTX-I toxin-activating lysine-acyltransferase ApxIC (172 aa).

Catalysis depends on residues H24 and D93.

It belongs to the RTX toxin acyltransferase family. Homodimer.

The protein resides in the cytoplasm. It catalyses the reaction a fatty acyl-[ACP] + L-lysyl-[protein] = N(6)-(fatty acyl)-L-lysyl-[protein] + holo-[ACP] + H(+). Protein-lysine acyltransferase that catalyzes fatty acylation of the protoxin, thereby converting it to the active toxin. The sequence is that of RTX-I toxin-activating lysine-acyltransferase ApxIC from Actinobacillus pleuropneumoniae (Haemophilus pleuropneumoniae).